We begin with the raw amino-acid sequence, 673 residues long: Methionine--tRNA ligase (673 aa).

The short motif at 13–23 (PYTNGFCHLGH) is the 'HIGH' region element. Zn(2+) is bound by residues Cys-144, Cys-147, Cys-156, and Cys-160. The short motif at 325 to 329 (KFSKS) is the 'KMSKS' region element. Lys-328 is a binding site for ATP. Residues 575 to 673 (DVAKLDLRVG…KDVPEGTKVH (99 aa)) enclose the tRNA-binding domain.

It belongs to the class-I aminoacyl-tRNA synthetase family. MetG type 1 subfamily. As to quaternary structure, homodimer. Zn(2+) is required as a cofactor.

Its subcellular location is the cytoplasm. The enzyme catalyses tRNA(Met) + L-methionine + ATP = L-methionyl-tRNA(Met) + AMP + diphosphate. Functionally, is required not only for elongation of protein synthesis but also for the initiation of all mRNA translation through initiator tRNA(fMet) aminoacylation. The sequence is that of Methionine--tRNA ligase from Methanocorpusculum labreanum (strain ATCC 43576 / DSM 4855 / Z).